Consider the following 81-residue polypeptide: Cytotoxin 4 (81 aa).

The N-terminal stretch at 1–21 is a signal peptide; sequence MKTLLLTLVVVTIVCLDLGYT. Cystine bridges form between C24–C42, C35–C59, C63–C74, and C75–C80.

This sequence belongs to the three-finger toxin family. Short-chain subfamily. Type IA cytotoxin sub-subfamily. As to quaternary structure, monomer in solution; Homodimer and oligomer in the presence of negatively charged lipids forming a pore with a size ranging between 20 and 30 Angstroms. Expressed by the venom gland.

The protein resides in the secreted. Its subcellular location is the target cell membrane. Its function is as follows. Basic protein that bind to cell membrane and depolarizes cardiomyocytes. This cytotoxin also shows lytic activities, but 2-fold more important than that of CTX-A2. It binds to the integrin alpha-V/beta-3 with a moderate affinity. Inhibits protein kinase C. It may interact with sulfatides in the cell membrane, which induces pore formation and cell internalization and is responsible for cytotoxicity in cardiomyocytes. It may also target the mitochondrial membrane and induces mitochondrial swelling and fragmentation. The sequence is that of Cytotoxin 4 from Naja atra (Chinese cobra).